A 307-amino-acid chain; its full sequence is N-acetylmuramic acid 6-phosphate etherase (307 aa).

The SIS domain maps to 59–222; that stretch reads TADRLRQGGR…STGVMVKLGK (164 aa). Glutamate 87 acts as the Proton donor in catalysis. Residue glutamate 118 is part of the active site.

It belongs to the GCKR-like family. MurNAc-6-P etherase subfamily. Homodimer.

The catalysed reaction is N-acetyl-D-muramate 6-phosphate + H2O = N-acetyl-D-glucosamine 6-phosphate + (R)-lactate. The protein operates within amino-sugar metabolism; N-acetylmuramate degradation. In terms of biological role, specifically catalyzes the cleavage of the D-lactyl ether substituent of MurNAc 6-phosphate, producing GlcNAc 6-phosphate and D-lactate. The protein is N-acetylmuramic acid 6-phosphate etherase of Nostoc sp. (strain PCC 7120 / SAG 25.82 / UTEX 2576).